We begin with the raw amino-acid sequence, 610 residues long: MSEIFDAKAFLKTVTSQPGVYRMYDAGGTVIYVGKAKDLKKRLSSYFRSNLASRKTEALVAQIQHIDVTVTHTETEALLLEHNYIKLYQPRYNVLLRDDKSYPFIFLSGDTHPRLAMHRGAKHAKGEYFGPFPNGYAVRETLALLQKIFPIRQCENSVYRNRSRPCLQYQIGRCLGPCVAGLVSEEEYTQQVEYVRLFLSGKDDQVLTQLIARMEKASQDLAFEEAARIRDQIQAVRRVTEKQFVSNAGDDLDVIGVAFDAGMACVHVLFIRQGKVLGSRSYFPKVPGGTELGEVVETFVGQFYLQGSQMRTLPGEILLDFNLSDKTLLADSLSELAGRRIHVQTKPRGDRARYLKLARTNAATALITKLSQQSTITQRLTALAAVLKLPAIKRMECFDISHTMGEQTVASCVVFDANGPLRAEYRRYNIAGITPGDDYAAMNQVLRRRYGKAIEESKIPDVILIDGGKGQLAQAKAVFAELDVPWDKHCPLLLGVAKGADRKAGLETLFFEPEGEGFSLPPDSPALHVIQHIRDESHDHAIGGHRKKRAKVKNTSTLETIEGVGPKRRQMLLKYMGGLQGLRNASVEEIAKVPGISQGLAEKIFWSLKH.

Residues 16-94 enclose the GIY-YIG domain; the sequence is SQPGVYRMYD…IKLYQPRYNV (79 aa). Residues 204 to 239 enclose the UVR domain; it reads DQVLTQLIARMEKASQDLAFEEAARIRDQIQAVRRV.

It belongs to the UvrC family. As to quaternary structure, interacts with UvrB in an incision complex.

The protein localises to the cytoplasm. Its function is as follows. The UvrABC repair system catalyzes the recognition and processing of DNA lesions. UvrC both incises the 5' and 3' sides of the lesion. The N-terminal half is responsible for the 3' incision and the C-terminal half is responsible for the 5' incision. The polypeptide is UvrABC system protein C (Salmonella paratyphi A (strain ATCC 9150 / SARB42)).